The chain runs to 101 residues: Urease subunit beta (101 aa).

This sequence belongs to the urease beta subunit family. As to quaternary structure, heterotrimer of UreA (gamma), UreB (beta) and UreC (alpha) subunits. Three heterotrimers associate to form the active enzyme.

The protein resides in the cytoplasm. The enzyme catalyses urea + 2 H2O + H(+) = hydrogencarbonate + 2 NH4(+). Its pathway is nitrogen metabolism; urea degradation; CO(2) and NH(3) from urea (urease route): step 1/1. The protein is Urease subunit beta of Cupriavidus pinatubonensis (strain JMP 134 / LMG 1197) (Cupriavidus necator (strain JMP 134)).